Consider the following 1254-residue polypeptide: DNA polymerase gamma (1254 aa).

The segment covering 1125-1137 (RKKENRIDDENKK) has biased composition (basic and acidic residues). Disordered regions lie at residues 1125–1145 (RKKE…KKNT) and 1202–1240 (YKKK…TNRN). A compositionally biased stretch (polar residues) spans 1208–1217 (QARTASSSPI). Over residues 1219-1231 (KTAKAVHSKKLPA) the composition is skewed to basic residues.

Belongs to the DNA polymerase type-A family. Requires Mg(2+) as cofactor.

The protein localises to the mitochondrion. The enzyme catalyses DNA(n) + a 2'-deoxyribonucleoside 5'-triphosphate = DNA(n+1) + diphosphate. In terms of biological role, involved in the replication of mitochondrial DNA. In Saccharomyces cerevisiae (strain ATCC 204508 / S288c) (Baker's yeast), this protein is DNA polymerase gamma (MIP1).